We begin with the raw amino-acid sequence, 591 residues long: MRSHYCGDVNKSHVGQEVTLVGWVNRSRDLGGVVFLDLRDREGLVQVVYDPDLPEVFNVASTLRAEFCVQVKGVVRARPDSQVNAQMKTGEIEVLGKELTIINSSEPLPLSLDNYQNNSEEQRLKYRYLDLRRPEMAQRLMFRAKVTSAVRRFLDSNGFLDIETPILTKATPEGARDYLVPSRTYKGQFFALPQSPQLFKQLLMMSGFDRYYQIVKCFRDEDLRADRQPEFTQIDIETSFMTSEQVMAKTEEMMRGLFLEMLNVDLGEFPRMTYNEAMRRFGSDKPDLRNPLELVDVADLLKNVEFAVFSGPANDEEGRVAALRIPGGASLSRKQIDDYTKFVGIYGAKGLAWMKLNDLTQGLEGIQSPVLKFLNEGIVNEIISRTGAQTGDIILFGADNAIVVAESMGALRLKAGEDFNLLEGQWRPLWVVDFPMFEKINGSFHAVHHPFTAPRGVTPQELEANPANRVSDAYDMVLNGCELGGGSVRIHNQEMQSAVFRILGITDEEAKEKFGFLLEALRYGTPPHAGLAFGLDRIIMLMTGASSIRDVMAFPKTTTAACPLTNAPGFANPQQLAELGISVVKAAKTED.

E173 contributes to the L-aspartate binding site. Residues 197-200 (QLFK) are aspartate. R219 serves as a coordination point for L-aspartate. Residues 219–221 (RDE) and Q228 contribute to the ATP site. H448 serves as a coordination point for L-aspartate. E482 serves as a coordination point for ATP. L-aspartate is bound at residue R489. Residue 534 to 537 (GLDR) coordinates ATP.

The protein belongs to the class-II aminoacyl-tRNA synthetase family. Type 1 subfamily. Homodimer.

The protein resides in the cytoplasm. The catalysed reaction is tRNA(Asp) + L-aspartate + ATP = L-aspartyl-tRNA(Asp) + AMP + diphosphate. Functionally, catalyzes the attachment of L-aspartate to tRNA(Asp) in a two-step reaction: L-aspartate is first activated by ATP to form Asp-AMP and then transferred to the acceptor end of tRNA(Asp). The chain is Aspartate--tRNA ligase from Shewanella sp. (strain MR-7).